Consider the following 363-residue polypeptide: D(1) dopamine receptor (363 aa).

The Extracellular portion of the chain corresponds to methionine 1–arginine 24. The N-linked (GlcNAc...) asparagine glycan is linked to asparagine 7. A helical transmembrane segment spans residues valine 25–valine 45. Over cysteine 46 to asparagine 61 the chain is Cytoplasmic. Residues phenylalanine 62–tryptophan 81 traverse the membrane as a helical segment. Residues lysine 82 to aspartate 98 lie on the Extracellular side of the membrane. Cysteine 97 and cysteine 187 are joined by a disulfide. A helical membrane pass occupies residues isoleucine 99 to valine 120. Residues aspartate 121 to arginine 139 are Cytoplasmic-facing. Residues valine 140–tryptophan 164 traverse the membrane as a helical segment. At histidine 165–threonine 194 the chain is on the extracellular side. The helical transmembrane segment at tyrosine 195–tyrosine 219 threads the bilayer. The Cytoplasmic portion of the chain corresponds to arginine 220 to threonine 271. The chain crosses the membrane as a helical span at residues leucine 272–lysine 297. The Extracellular portion of the chain corresponds to arginine 298–threonine 310. A helical membrane pass occupies residues phenylalanine 311–alanine 330. The Cytoplasmic segment spans residues phenylalanine 331–asparagine 363. A lipid anchor (S-palmitoyl cysteine) is attached at cysteine 345.

Belongs to the G-protein coupled receptor 1 family. Retina.

The protein resides in the cell membrane. It is found in the cell projection. Its subcellular location is the cilium membrane. Its function is as follows. Dopamine receptor whose activity is mediated by G proteins which activate adenylyl cyclase. Could be involved in growth hormone release. The chain is D(1) dopamine receptor from Carassius auratus (Goldfish).